A 74-amino-acid polypeptide reads, in one-letter code: ATP synthase subunit c (74 aa).

The next 2 helical transmembrane spans lie at 8 to 28 (FIGV…VSNI) and 52 to 72 (IGAG…MLLI).

The protein belongs to the ATPase C chain family. In terms of assembly, F-type ATPases have 2 components, F(1) - the catalytic core - and F(0) - the membrane proton channel. F(1) has five subunits: alpha(3), beta(3), gamma(1), delta(1), epsilon(1). F(0) has three main subunits: a(1), b(2) and c(10-14). The alpha and beta chains form an alternating ring which encloses part of the gamma chain. F(1) is attached to F(0) by a central stalk formed by the gamma and epsilon chains, while a peripheral stalk is formed by the delta and b chains.

The protein localises to the cell inner membrane. F(1)F(0) ATP synthase produces ATP from ADP in the presence of a proton or sodium gradient. F-type ATPases consist of two structural domains, F(1) containing the extramembraneous catalytic core and F(0) containing the membrane proton channel, linked together by a central stalk and a peripheral stalk. During catalysis, ATP synthesis in the catalytic domain of F(1) is coupled via a rotary mechanism of the central stalk subunits to proton translocation. Functionally, key component of the F(0) channel; it plays a direct role in translocation across the membrane. A homomeric c-ring of between 10-14 subunits forms the central stalk rotor element with the F(1) delta and epsilon subunits. This chain is ATP synthase subunit c, found in Rickettsia bellii (strain RML369-C).